The primary structure comprises 39 residues: Omega-actinopoditoxin-Mb1a (39 aa).

Cystine bridges form between Cys-4/Cys-19, Cys-11/Cys-30, and Cys-18/Cys-38.

Post-translationally, contains 3 disulfide bonds. As to expression, expressed by the venom gland.

The protein resides in the secreted. Functionally, potent inhibitor of insect, but not mammalian, voltage-gated calcium channels (Cav). The chain is Omega-actinopoditoxin-Mb1a from Missulena bradleyi (Eastern mouse spider).